The primary structure comprises 97 residues: MNLMDFFRRNKEPTATTAKDRLQIVLAHERADRNAPDFLPALQKELLAVIKKYVPIDDDKVAVKLERESGCSMLEVNVELPAPTKGAPRQPAATAAG.

It belongs to the MinE family.

Its function is as follows. Prevents the cell division inhibition by proteins MinC and MinD at internal division sites while permitting inhibition at polar sites. This ensures cell division at the proper site by restricting the formation of a division septum at the midpoint of the long axis of the cell. The polypeptide is Cell division topological specificity factor (Rhodospirillum centenum (strain ATCC 51521 / SW)).